Reading from the N-terminus, the 553-residue chain is RNA exonuclease 1 (553 aa).

Phosphoserine is present on Ser24. Positions 167 to 194 (MEKINKLKELQKKKKITINDLVLSEQQL) form a coiled coil. The region spanning 225–373 (IFALDCEMCL…EDARACLELT (149 aa)) is the Exonuclease domain. Residues 509-533 (WNNLSTELEFIQDKKERLDKRRERE) adopt a coiled-coil conformation.

This sequence belongs to the REXO1/REXO3 family.

It is found in the nucleus. Its function is as follows. 3' exoribonuclease required for 5S rRNA maturation and for the proper maturation of the 5' cistron of the tRNA-Arg3 dicistronic gene. Involved with REX2 in the maturation of the 5.8S rRNA, and with REX2 and REX3, in the 3' processing of the U5L snRNA. The polypeptide is RNA exonuclease 1 (RNH70) (Saccharomyces cerevisiae (strain ATCC 204508 / S288c) (Baker's yeast)).